A 188-amino-acid chain; its full sequence is dCTP deaminase (188 aa).

DCTP-binding positions include 111–116 (KSTYAR), 135–137 (TLE), Gln-156, Tyr-170, and Gln-180. The active-site Proton donor/acceptor is Glu-137.

Belongs to the dCTP deaminase family. As to quaternary structure, homotrimer.

The enzyme catalyses dCTP + H2O + H(+) = dUTP + NH4(+). It participates in pyrimidine metabolism; dUMP biosynthesis; dUMP from dCTP (dUTP route): step 1/2. Functionally, catalyzes the deamination of dCTP to dUTP. The sequence is that of dCTP deaminase from Azoarcus sp. (strain BH72).